The sequence spans 56 residues: Large ribosomal subunit protein bL32 (56 aa).

Over residues 1–20 (MAVPKRRTSRSNTRSRRAQW) the composition is skewed to basic residues. Residues 1 to 26 (MAVPKRRTSRSNTRSRRAQWKAKAPA) are disordered.

The protein belongs to the bacterial ribosomal protein bL32 family.

This chain is Large ribosomal subunit protein bL32, found in Parafrankia sp. (strain EAN1pec).